A 207-amino-acid polypeptide reads, in one-letter code: uncharacterized protein (207 aa).

The S-adenosyl-L-methionine site is built by Gly-51 and Asp-72.

It belongs to the methyltransferase superfamily. YrrT family.

Its function is as follows. Could be a S-adenosyl-L-methionine-dependent methyltransferase. This is an uncharacterized protein from Staphylococcus carnosus (strain TM300).